The following is a 367-amino-acid chain: 4-hydroxyphenylpyruvate dioxygenase (367 aa).

2 consecutive VOC domains span residues 3–135 and 166–324; these read GFDH…FVDR and LIDH…IFTN. Fe cation is bound by residues His169, His252, and Glu335.

The protein belongs to the 4HPPD family. Fe cation is required as a cofactor.

The enzyme catalyses 3-(4-hydroxyphenyl)pyruvate + O2 = homogentisate + CO2. Its pathway is amino-acid degradation; L-phenylalanine degradation; acetoacetate and fumarate from L-phenylalanine: step 3/6. In terms of biological role, key enzyme in the degradation of tyrosine. This chain is 4-hydroxyphenylpyruvate dioxygenase (hpd), found in Dictyostelium discoideum (Social amoeba).